The primary structure comprises 133 residues: Holo-[acyl-carrier-protein] synthase (133 aa).

Residues D8 and E56 each coordinate Mg(2+).

It belongs to the P-Pant transferase superfamily. AcpS family. The cofactor is Mg(2+).

The protein localises to the cytoplasm. The enzyme catalyses apo-[ACP] + CoA = holo-[ACP] + adenosine 3',5'-bisphosphate + H(+). Transfers the 4'-phosphopantetheine moiety from coenzyme A to a Ser of acyl-carrier-protein. The chain is Holo-[acyl-carrier-protein] synthase from Clostridium perfringens (strain 13 / Type A).